Here is a 167-residue protein sequence, read N- to C-terminus: Ribosome maturation factor RimM (167 aa).

One can recognise a PRC barrel domain in the interval 94–165 (EHEYYYSDII…TIKITPMEGL (72 aa)).

Belongs to the RimM family. Binds ribosomal protein uS19.

It localises to the cytoplasm. In terms of biological role, an accessory protein needed during the final step in the assembly of 30S ribosomal subunit, possibly for assembly of the head region. Essential for efficient processing of 16S rRNA. May be needed both before and after RbfA during the maturation of 16S rRNA. It has affinity for free ribosomal 30S subunits but not for 70S ribosomes. This is Ribosome maturation factor RimM from Staphylococcus epidermidis (strain ATCC 35984 / DSM 28319 / BCRC 17069 / CCUG 31568 / BM 3577 / RP62A).